A 72-amino-acid chain; its full sequence is DNA-directed RNA polymerase subunit omega (72 aa).

The protein belongs to the RNA polymerase subunit omega family. As to quaternary structure, the RNAP catalytic core consists of 2 alpha, 1 beta, 1 beta' and 1 omega subunit. When a sigma factor is associated with the core the holoenzyme is formed, which can initiate transcription.

It carries out the reaction RNA(n) + a ribonucleoside 5'-triphosphate = RNA(n+1) + diphosphate. Promotes RNA polymerase assembly. Latches the N- and C-terminal regions of the beta' subunit thereby facilitating its interaction with the beta and alpha subunits. The chain is DNA-directed RNA polymerase subunit omega from Clostridium kluyveri (strain NBRC 12016).